We begin with the raw amino-acid sequence, 141 residues long: Large ribosomal subunit protein uL11 (141 aa).

It belongs to the universal ribosomal protein uL11 family. As to quaternary structure, part of the ribosomal stalk of the 50S ribosomal subunit. Interacts with L10 and the large rRNA to form the base of the stalk. L10 forms an elongated spine to which L12 dimers bind in a sequential fashion forming a multimeric L10(L12)X complex. Post-translationally, one or more lysine residues are methylated.

Its function is as follows. Forms part of the ribosomal stalk which helps the ribosome interact with GTP-bound translation factors. The sequence is that of Large ribosomal subunit protein uL11 from Lactococcus lactis subsp. lactis (strain IL1403) (Streptococcus lactis).